The primary structure comprises 451 residues: Bifunctional protein GlmU (451 aa).

The pyrophosphorylase stretch occupies residues 1-229 (MQRHAIILAA…FDEIIGVNDR (229 aa)). UDP-N-acetyl-alpha-D-glucosamine contacts are provided by residues 8 to 11 (LAAG), K22, Q72, and 77 to 78 (GT). D102 serves as a coordination point for Mg(2+). UDP-N-acetyl-alpha-D-glucosamine contacts are provided by G139, E154, and N227. N227 lines the Mg(2+) pocket. The segment at 230–250 (LMLSEAEKALQQRINRYHMEN) is linker. The interval 251–451 (GVTIIDPSST…QVNKEGYLKK (201 aa)) is N-acetyltransferase. UDP-N-acetyl-alpha-D-glucosamine contacts are provided by R332 and K350. H362 acts as the Proton acceptor in catalysis. Positions 365 and 376 each coordinate UDP-N-acetyl-alpha-D-glucosamine. Acetyl-CoA-binding positions include 385–386 (NY), A422, and R439.

It in the N-terminal section; belongs to the N-acetylglucosamine-1-phosphate uridyltransferase family. In the C-terminal section; belongs to the transferase hexapeptide repeat family. In terms of assembly, homotrimer. It depends on Mg(2+) as a cofactor.

The protein resides in the cytoplasm. The enzyme catalyses alpha-D-glucosamine 1-phosphate + acetyl-CoA = N-acetyl-alpha-D-glucosamine 1-phosphate + CoA + H(+). It carries out the reaction N-acetyl-alpha-D-glucosamine 1-phosphate + UTP + H(+) = UDP-N-acetyl-alpha-D-glucosamine + diphosphate. Its pathway is nucleotide-sugar biosynthesis; UDP-N-acetyl-alpha-D-glucosamine biosynthesis; N-acetyl-alpha-D-glucosamine 1-phosphate from alpha-D-glucosamine 6-phosphate (route II): step 2/2. The protein operates within nucleotide-sugar biosynthesis; UDP-N-acetyl-alpha-D-glucosamine biosynthesis; UDP-N-acetyl-alpha-D-glucosamine from N-acetyl-alpha-D-glucosamine 1-phosphate: step 1/1. It participates in bacterial outer membrane biogenesis; LPS lipid A biosynthesis. Functionally, catalyzes the last two sequential reactions in the de novo biosynthetic pathway for UDP-N-acetylglucosamine (UDP-GlcNAc). The C-terminal domain catalyzes the transfer of acetyl group from acetyl coenzyme A to glucosamine-1-phosphate (GlcN-1-P) to produce N-acetylglucosamine-1-phosphate (GlcNAc-1-P), which is converted into UDP-GlcNAc by the transfer of uridine 5-monophosphate (from uridine 5-triphosphate), a reaction catalyzed by the N-terminal domain. This chain is Bifunctional protein GlmU, found in Staphylococcus epidermidis.